Reading from the N-terminus, the 474-residue chain is Gamma-aminobutyric acid receptor subunit beta-1 (474 aa).

The N-terminal stretch at 1 to 25 is a signal peptide; the sequence is MWTVQNRESLGLLSFPVMITMVCCA. Residues 26–245 lie on the Extracellular side of the membrane; it reads HSTNEPSNMS…SFRLKRNIGY (220 aa). Asn105 is a glycosylation site (N-linked (GlcNAc...) asparagine). Histamine is bound at residue Tyr122. Cys161 and Cys175 are oxidised to a cystine. An N-linked (GlcNAc...) asparagine glycan is attached at Asn174. Histamine contacts are provided by residues 181 to 182 and Thr227; that span reads SY. 2 residues coordinate 4-aminobutanoate: Tyr182 and Thr227. Helical transmembrane passes span 246 to 267, 271 to 293, and 305 to 327; these read FILQTYMPSTLITILSWVSFWI, ASAARVALGITTVLTMTTISTHL, and AIDIYLMGCFVFVFLALLEYAFV. The Cytoplasmic segment spans residues 328–451; it reads NYIFFGKGPQ…DLTDVNSIDK (124 aa). The helical transmembrane segment at 452–473 threads the bilayer; the sequence is WSRMFFPITFSLFNVVYWLYYV.

Belongs to the ligand-gated ion channel (TC 1.A.9) family. Gamma-aminobutyric acid receptor (TC 1.A.9.5) subfamily. GABRB1 sub-subfamily. As to quaternary structure, heteropentamer, formed by a combination of alpha (GABRA1-6), beta (GABRB1-3), gamma (GABRG1-3), delta (GABRD), epsilon (GABRE), rho (GABRR1-3), pi (GABRP) and theta (GABRQ) chains, each subunit exhibiting distinct physiological and pharmacological properties. Binds UBQLN1.

It is found in the postsynaptic cell membrane. The protein resides in the cell membrane. The catalysed reaction is chloride(in) = chloride(out). With respect to regulation, potentiated by etomidate, propofol, pregnanolone and flurazepam. Potentiated by histamine. Beta subunit of the heteropentameric ligand-gated chloride channel gated by gamma-aminobutyric acid (GABA), a major inhibitory neurotransmitter in the brain. GABA-gated chloride channels, also named GABA(A) receptors (GABAAR), consist of five subunits arranged around a central pore and contain one or two GABA active binding sites located at the alpha and beta subunit interfaces, depending on subunit composition. When activated by GABA, GABAARs selectively allow the flow of chloride anions across the cell membrane down their electrochemical gradient. Chloride influx into the postsynaptic neuron following GABAAR opening decreases the neuron ability to generate a new action potential, thereby reducing nerve transmission. Beta-containing GABAARs can simultaneously bind GABA and histamine where histamine binds at the interface of two neighboring beta subunits, which may be involved in the regulation of sleep and wakefulness. This chain is Gamma-aminobutyric acid receptor subunit beta-1, found in Homo sapiens (Human).